The primary structure comprises 226 residues: tRNA (guanine-N(1)-)-methyltransferase (226 aa).

Residues glycine 112 and 132 to 137 (IGDYVL) contribute to the S-adenosyl-L-methionine site.

It belongs to the RNA methyltransferase TrmD family. Homodimer.

The protein resides in the cytoplasm. The enzyme catalyses guanosine(37) in tRNA + S-adenosyl-L-methionine = N(1)-methylguanosine(37) in tRNA + S-adenosyl-L-homocysteine + H(+). Its function is as follows. Specifically methylates guanosine-37 in various tRNAs. This Christiangramia forsetii (strain DSM 17595 / CGMCC 1.15422 / KT0803) (Gramella forsetii) protein is tRNA (guanine-N(1)-)-methyltransferase.